Here is a 165-residue protein sequence, read N- to C-terminus: MPRIALYPGSFDPVTNGHLDVVRRAVTLCDRLIVAIGVHPGKKPLFSTEERLAMVRDVFGPIAAEAGCAFDCTTYDNLTITAAQQAGATIMVRGLRDGTDLDYEMQIAGMNETMAPTVQTVFVPASVAVRPITATLVRQIAAMGGDVSAFVPPQVAALLKTKFAG.

Ser10 provides a ligand contact to substrate. Residues 10 to 11 (SF) and His18 each bind ATP. Lys42, Thr79, and Arg93 together coordinate substrate. ATP contacts are provided by residues 94 to 96 (GLR), Glu104, and 129 to 135 (VRPITAT).

Belongs to the bacterial CoaD family. Homohexamer. Requires Mg(2+) as cofactor.

The protein resides in the cytoplasm. It carries out the reaction (R)-4'-phosphopantetheine + ATP + H(+) = 3'-dephospho-CoA + diphosphate. Its pathway is cofactor biosynthesis; coenzyme A biosynthesis; CoA from (R)-pantothenate: step 4/5. Reversibly transfers an adenylyl group from ATP to 4'-phosphopantetheine, yielding dephospho-CoA (dPCoA) and pyrophosphate. This Rhodopseudomonas palustris (strain BisA53) protein is Phosphopantetheine adenylyltransferase.